A 172-amino-acid chain; its full sequence is Cell division protein SepF (172 aa).

The interval 16-78 (DGDEHYEPQP…RAASNRDDSS (63 aa)) is disordered. Over residues 17 to 48 (GDEHYEPQPEGKQTRPAQKNEEYVDQEIRHTE) the composition is skewed to basic and acidic residues.

It belongs to the SepF family. In terms of assembly, homodimer. Interacts with FtsZ.

It localises to the cytoplasm. Its function is as follows. Cell division protein that is part of the divisome complex and is recruited early to the Z-ring. Probably stimulates Z-ring formation, perhaps through the cross-linking of FtsZ protofilaments. Its function overlaps with FtsA. This is Cell division protein SepF from Renibacterium salmoninarum (strain ATCC 33209 / DSM 20767 / JCM 11484 / NBRC 15589 / NCIMB 2235).